The sequence spans 217 residues: Ribose-5-phosphate isomerase A (217 aa).

Residues 28 to 31 (TGST), 81 to 84 (DGAD), and 94 to 97 (KGGG) contribute to the substrate site. Catalysis depends on E103, which acts as the Proton acceptor. K121 contacts substrate.

It belongs to the ribose 5-phosphate isomerase family. In terms of assembly, homodimer.

It catalyses the reaction aldehydo-D-ribose 5-phosphate = D-ribulose 5-phosphate. Its pathway is carbohydrate degradation; pentose phosphate pathway; D-ribose 5-phosphate from D-ribulose 5-phosphate (non-oxidative stage): step 1/1. Functionally, catalyzes the reversible conversion of ribose-5-phosphate to ribulose 5-phosphate. The sequence is that of Ribose-5-phosphate isomerase A from Aeromonas salmonicida (strain A449).